The primary structure comprises 551 residues: GMP synthase [glutamine-hydrolyzing] (551 aa).

Residues 40–233 enclose the Glutamine amidotransferase type-1 domain; it reads KILIVDFGSQ…VRKIAGLTGD (194 aa). Cys117 serves as the catalytic Nucleophile. Catalysis depends on residues His207 and Glu209. Residues 234–426 form the GMPS ATP-PPase domain; it reads WTMRAFREEE…LGLPEIFVGR (193 aa). 261–267 provides a ligand contact to ATP; it reads SGGVDSA.

Homodimer.

It catalyses the reaction XMP + L-glutamine + ATP + H2O = GMP + L-glutamate + AMP + diphosphate + 2 H(+). Its pathway is purine metabolism; GMP biosynthesis; GMP from XMP (L-Gln route): step 1/1. Functionally, catalyzes the synthesis of GMP from XMP. This chain is GMP synthase [glutamine-hydrolyzing], found in Bradyrhizobium diazoefficiens (strain JCM 10833 / BCRC 13528 / IAM 13628 / NBRC 14792 / USDA 110).